The sequence spans 184 residues: ATP synthase subunit b, chloroplastic (184 aa).

Residues 27 to 49 (LATNPINLSVVLGVLIFFGKGVL) form a helical membrane-spanning segment.

It belongs to the ATPase B chain family. In terms of assembly, F-type ATPases have 2 components, F(1) - the catalytic core - and F(0) - the membrane proton channel. F(1) has five subunits: alpha(3), beta(3), gamma(1), delta(1), epsilon(1). F(0) has four main subunits: a(1), b(1), b'(1) and c(10-14). The alpha and beta chains form an alternating ring which encloses part of the gamma chain. F(1) is attached to F(0) by a central stalk formed by the gamma and epsilon chains, while a peripheral stalk is formed by the delta, b and b' chains.

Its subcellular location is the plastid. The protein localises to the chloroplast thylakoid membrane. Its function is as follows. F(1)F(0) ATP synthase produces ATP from ADP in the presence of a proton or sodium gradient. F-type ATPases consist of two structural domains, F(1) containing the extramembraneous catalytic core and F(0) containing the membrane proton channel, linked together by a central stalk and a peripheral stalk. During catalysis, ATP synthesis in the catalytic domain of F(1) is coupled via a rotary mechanism of the central stalk subunits to proton translocation. Component of the F(0) channel, it forms part of the peripheral stalk, linking F(1) to F(0). The chain is ATP synthase subunit b, chloroplastic from Oenothera argillicola (Appalachian evening primrose).